Here is a 637-residue protein sequence, read N- to C-terminus: tRNA uridine 5-carboxymethylaminomethyl modification enzyme MnmG (637 aa).

Residues 15–20 (GAGHAG), Val127, and Ser182 contribute to the FAD site. Residue 274 to 288 (GPRYCPSIEDKVVRF) participates in NAD(+) binding. Position 371 (Gln371) interacts with FAD.

This sequence belongs to the MnmG family. As to quaternary structure, homodimer. Heterotetramer of two MnmE and two MnmG subunits. FAD serves as cofactor.

The protein localises to the cytoplasm. NAD-binding protein involved in the addition of a carboxymethylaminomethyl (cmnm) group at the wobble position (U34) of certain tRNAs, forming tRNA-cmnm(5)s(2)U34. In Heliobacterium modesticaldum (strain ATCC 51547 / Ice1), this protein is tRNA uridine 5-carboxymethylaminomethyl modification enzyme MnmG.